The following is a 259-amino-acid chain: 5'-nucleotidase SurE (259 aa).

Positions 8, 9, 40, and 92 each coordinate a divalent metal cation.

Belongs to the SurE nucleotidase family. Requires a divalent metal cation as cofactor.

It is found in the cytoplasm. The catalysed reaction is a ribonucleoside 5'-phosphate + H2O = a ribonucleoside + phosphate. Functionally, nucleotidase that shows phosphatase activity on nucleoside 5'-monophosphates. This is 5'-nucleotidase SurE from Xanthomonas oryzae pv. oryzae (strain MAFF 311018).